Reading from the N-terminus, the 309-residue chain is NAD kinase (309 aa).

The active-site Proton acceptor is the aspartate 89. Residues 89–90 (DG), 163–164 (NE), arginine 191, aspartate 193, and 204–209 (TAYSLS) each bind NAD(+).

This sequence belongs to the NAD kinase family. A divalent metal cation serves as cofactor.

Its subcellular location is the cytoplasm. The enzyme catalyses NAD(+) + ATP = ADP + NADP(+) + H(+). Functionally, involved in the regulation of the intracellular balance of NAD and NADP, and is a key enzyme in the biosynthesis of NADP. Catalyzes specifically the phosphorylation on 2'-hydroxyl of the adenosine moiety of NAD to yield NADP. The protein is NAD kinase of Shewanella halifaxensis (strain HAW-EB4).